A 200-amino-acid polypeptide reads, in one-letter code: Coiled-coil domain-containing protein 85B (200 aa).

Residues 57–84 (LQGHLLEIRELKVINQRLQEENQELRDL) are a coiled coil. Residues 178–188 (DGSSSTGSVGS) show a composition bias toward low complexity. The tract at residues 178-200 (DGSSSTGSVGSPDQLHLVCSPDD) is disordered.

It belongs to the CCDC85 family.

It is found in the nucleus. It localises to the cytoplasm. Its subcellular location is the cytoskeleton. The protein localises to the microtubule organizing center. The protein resides in the centrosome. It is found in the cell junction. It localises to the adherens junction. In terms of biological role, functions as a transcriptional repressor. May inhibit the activity of CTNNB1 in a TP53-dependent manner and thus regulate cell growth. May function in adipocyte differentiation, negatively regulating mitotic clonal expansion. Plays a role in cell-cell adhesion and epithelium development through its interaction with proteins of the beta-catenin family. This is Coiled-coil domain-containing protein 85B (ccdc85b) from Danio rerio (Zebrafish).